The following is a 123-amino-acid chain: Small ribosomal subunit protein uS13 (123 aa).

The tract at residues 97–123 (PVRGQRTRSNARTRKGPRPSRIKKKGK) is disordered. Basic residues predominate over residues 101–123 (QRTRSNARTRKGPRPSRIKKKGK).

The protein belongs to the universal ribosomal protein uS13 family. In terms of assembly, part of the 30S ribosomal subunit. Forms a loose heterodimer with protein S19. Forms two bridges to the 50S subunit in the 70S ribosome.

In terms of biological role, located at the top of the head of the 30S subunit, it contacts several helices of the 16S rRNA. In the 70S ribosome it contacts the 23S rRNA (bridge B1a) and protein L5 of the 50S subunit (bridge B1b), connecting the 2 subunits; these bridges are implicated in subunit movement. Contacts the tRNAs in the A and P-sites. This Fervidobacterium nodosum (strain ATCC 35602 / DSM 5306 / Rt17-B1) protein is Small ribosomal subunit protein uS13.